We begin with the raw amino-acid sequence, 802 residues long: Valine--tRNA ligase (802 aa).

The 'HIGH' region signature appears at 45–55; that stretch reads PTISGQLHIGH. Positions 524-528 match the 'KMSKS' region motif; the sequence is KMSKS. Lysine 527 lines the ATP pocket.

This sequence belongs to the class-I aminoacyl-tRNA synthetase family. ValS type 2 subfamily. In terms of assembly, monomer.

It localises to the cytoplasm. It carries out the reaction tRNA(Val) + L-valine + ATP = L-valyl-tRNA(Val) + AMP + diphosphate. Catalyzes the attachment of valine to tRNA(Val). As ValRS can inadvertently accommodate and process structurally similar amino acids such as threonine, to avoid such errors, it has a 'posttransfer' editing activity that hydrolyzes mischarged Thr-tRNA(Val) in a tRNA-dependent manner. The sequence is that of Valine--tRNA ligase from Ehrlichia canis (strain Jake).